The primary structure comprises 694 residues: Zinc finger BED domain-containing protein 5 (694 aa).

The segment at Arg-109–Asp-165 adopts a BED-type zinc-finger fold. Residues Cys-133, Cys-136, His-153, and His-158 each coordinate Zn(2+).

The polypeptide is Zinc finger BED domain-containing protein 5 (ZBED5) (Canis lupus familiaris (Dog)).